The following is a 585-amino-acid chain: Eukaryotic translation initiation factor 3 subunit D (585 aa).

The span at 43 to 60 shows a compositional bias: basic and acidic residues; that stretch reads LGRMADWTGDGKDRDRGG. Disordered stretches follow at residues 43 to 62 and 109 to 152; these read LGRM…GGRQ and RGGG…NRSA. Residues 109-130 are compositionally biased toward gly residues; it reads RGGGTVFRGRGQRGVGQRGGRA. An RNA gate region spans residues 300–314; it reads SIDLVTVNENAADAP. Residues 560–585 are disordered; it reads VPPNTFEEDDEAAEEQEEKAEEESEE. The segment covering 565 to 585 has biased composition (acidic residues); that stretch reads FEEDDEAAEEQEEKAEEESEE.

Belongs to the eIF-3 subunit D family. Component of the eukaryotic translation initiation factor 3 (eIF-3) complex.

It is found in the cytoplasm. Functionally, mRNA cap-binding component of the eukaryotic translation initiation factor 3 (eIF-3) complex, which is involved in protein synthesis of a specialized repertoire of mRNAs and, together with other initiation factors, stimulates binding of mRNA and methionyl-tRNAi to the 40S ribosome. The eIF-3 complex specifically targets and initiates translation of a subset of mRNAs involved in cell proliferation. In the eIF-3 complex, eif3d specifically recognizes and binds the 7-methylguanosine cap of a subset of mRNAs. This is Eukaryotic translation initiation factor 3 subunit D from Neosartorya fischeri (strain ATCC 1020 / DSM 3700 / CBS 544.65 / FGSC A1164 / JCM 1740 / NRRL 181 / WB 181) (Aspergillus fischerianus).